Consider the following 287-residue polypeptide: Large ribosomal subunit protein uL2 (287 aa).

The disordered stretch occupies residues 221–287; that stretch reads RGSVMNPCDH…SKRSRGGRDS (67 aa). Positions 258-287 are enriched in basic residues; it reads KTRKRNKPSNRFVLRKRRRTSKRSRGGRDS.

This sequence belongs to the universal ribosomal protein uL2 family. In terms of assembly, part of the 50S ribosomal subunit. Forms a bridge to the 30S subunit in the 70S ribosome.

Its function is as follows. One of the primary rRNA binding proteins. Required for association of the 30S and 50S subunits to form the 70S ribosome, for tRNA binding and peptide bond formation. It has been suggested to have peptidyltransferase activity; this is somewhat controversial. Makes several contacts with the 16S rRNA in the 70S ribosome. This chain is Large ribosomal subunit protein uL2, found in Prochlorococcus marinus (strain MIT 9303).